The chain runs to 397 residues: Putative teichuronic acid biosynthesis glycosyltransferase TuaH (397 aa).

The protein belongs to the glycosyltransferase group 1 family.

It functions in the pathway cell wall biogenesis; teichuronic acid biosynthesis. The protein is Putative teichuronic acid biosynthesis glycosyltransferase TuaH (tuaH) of Bacillus subtilis (strain 168).